Consider the following 204-residue polypeptide: Peptide deformylase (204 aa).

Cys131 and His174 together coordinate Fe cation. Residue Glu175 is part of the active site. Fe cation is bound at residue His178.

The protein belongs to the polypeptide deformylase family. Fe(2+) is required as a cofactor.

It catalyses the reaction N-terminal N-formyl-L-methionyl-[peptide] + H2O = N-terminal L-methionyl-[peptide] + formate. In terms of biological role, removes the formyl group from the N-terminal Met of newly synthesized proteins. Requires at least a dipeptide for an efficient rate of reaction. N-terminal L-methionine is a prerequisite for activity but the enzyme has broad specificity at other positions. The protein is Peptide deformylase of Streptococcus pyogenes serotype M1.